A 276-amino-acid polypeptide reads, in one-letter code: Large ribosomal subunit protein uL2 (276 aa).

Residues 224–276 (VAMNPVDHPHGGGEGKTGEGRVPVSPWGTPTKGYRTRRNKRTTSMIVQRRQKR) are disordered. Basic and acidic residues predominate over residues 230–242 (DHPHGGGEGKTGE).

It belongs to the universal ribosomal protein uL2 family. In terms of assembly, part of the 50S ribosomal subunit. Forms a bridge to the 30S subunit in the 70S ribosome.

One of the primary rRNA binding proteins. Required for association of the 30S and 50S subunits to form the 70S ribosome, for tRNA binding and peptide bond formation. It has been suggested to have peptidyltransferase activity; this is somewhat controversial. Makes several contacts with the 16S rRNA in the 70S ribosome. This is Large ribosomal subunit protein uL2 from Polynucleobacter asymbioticus (strain DSM 18221 / CIP 109841 / QLW-P1DMWA-1) (Polynucleobacter necessarius subsp. asymbioticus).